The sequence spans 264 residues: 3-methyl-2-oxobutanoate hydroxymethyltransferase (264 aa).

Mg(2+) is bound by residues Asp-45 and Asp-84. 3-methyl-2-oxobutanoate is bound by residues Asp-45–Ser-46, Asp-84, and Lys-112. Residue Glu-114 participates in Mg(2+) binding. Glu-181 functions as the Proton acceptor in the catalytic mechanism.

This sequence belongs to the PanB family. In terms of assembly, homodecamer; pentamer of dimers. Requires Mg(2+) as cofactor.

Its subcellular location is the cytoplasm. The enzyme catalyses 3-methyl-2-oxobutanoate + (6R)-5,10-methylene-5,6,7,8-tetrahydrofolate + H2O = 2-dehydropantoate + (6S)-5,6,7,8-tetrahydrofolate. It participates in cofactor biosynthesis; (R)-pantothenate biosynthesis; (R)-pantoate from 3-methyl-2-oxobutanoate: step 1/2. Functionally, catalyzes the reversible reaction in which hydroxymethyl group from 5,10-methylenetetrahydrofolate is transferred onto alpha-ketoisovalerate to form ketopantoate. The polypeptide is 3-methyl-2-oxobutanoate hydroxymethyltransferase (Escherichia coli O157:H7).